The following is a 190-amino-acid chain: Elongation factor P-like protein (190 aa).

This sequence belongs to the elongation factor P family.

The polypeptide is Elongation factor P-like protein (Pseudoalteromonas atlantica (strain T6c / ATCC BAA-1087)).